A 376-amino-acid chain; its full sequence is MSTNTTTTNATPELAKESVFFQSNHEDLKNRPKVRGYDFNEGVDFSKLFETYKTIGYQASAVGEAIDEINRMISWRLVDEPLKEGEDDDEERKVTRCKIFLGYTSNLVSSGVREIIRYLVQHSMVDVIVSTAGGVEEDFIKCLAPTYMGEFHLEGEKLRRKGLNRIGNLLVPNDNYCKFEDWIMPILDQMVEEQKTKGTVWTPSRVINRLGKEINHEDSIYYWAWKNDIPVYSPALTDGSIGDMMYFHSYNTPGLVLDIISDIRAINNHAVYSKKSGMIILGGGVIKHHICNANLFRNGADYSVFVNTGNEFDGSDSGARPDEAVSWGKIKLDAKPVKVYSEASIVFPILVAETFAKTFKKKSPEELKLNKRSIFD.

NAD(+)-binding positions include 105 to 109, 131 to 133, Glu137, and Asp238; these read SNLVS and TAG. 136–137 contributes to the spermidine binding site; sequence EE. Asp243 lines the spermidine pocket. Gly283 is a binding site for NAD(+). His288 contacts spermidine. An NAD(+)-binding site is contributed by 308-309; the sequence is TG. Residues 314 to 316 and 323 to 329 each bind spermidine; these read GSD and EAVSWGK. Lys329 serves as the catalytic Nucleophile. Position 342–343 (342–343) interacts with NAD(+); sequence EA.

It belongs to the deoxyhypusine synthase family. It depends on NAD(+) as a cofactor.

It carries out the reaction [eIF5A protein]-L-lysine + spermidine = [eIF5A protein]-deoxyhypusine + propane-1,3-diamine. The protein operates within protein modification; eIF5A hypusination. In terms of biological role, catalyzes the NAD-dependent oxidative cleavage of spermidine and the subsequent transfer of the butylamine moiety of spermidine to the epsilon-amino group of a critical lysine residue of the eIF-5A precursor protein to form the intermediate deoxyhypusine residue. This is the first step of the post-translational modification of that lysine into an unusual amino acid residue named hypusine. Hypusination is unique to mature eIF-5A factor and is essential for its function. This Dictyostelium discoideum (Social amoeba) protein is Probable deoxyhypusine synthase (dhps).